We begin with the raw amino-acid sequence, 152 residues long: UPF0178 protein Plav_1521 (152 aa).

The tract at residues 114 to 152 (LRETGQSKGGGPAFSKEDRSRFLRSLEDTVQAIRRRPPP) is disordered. Basic and acidic residues predominate over residues 128-140 (SKEDRSRFLRSLE).

The protein belongs to the UPF0178 family.

In Parvibaculum lavamentivorans (strain DS-1 / DSM 13023 / NCIMB 13966), this protein is UPF0178 protein Plav_1521.